A 442-amino-acid polypeptide reads, in one-letter code: Histidinol dehydrogenase (442 aa).

Positions 138, 196, and 219 each coordinate NAD(+). 3 residues coordinate substrate: S245, Q267, and H270. Zn(2+) is bound by residues Q267 and H270. Active-site proton acceptor residues include E334 and H335. 4 residues coordinate substrate: H335, D368, E422, and H427. Residue D368 coordinates Zn(2+). Zn(2+) is bound at residue H427.

The protein belongs to the histidinol dehydrogenase family. In terms of assembly, homodimer. Zn(2+) is required as a cofactor.

It carries out the reaction L-histidinol + 2 NAD(+) + H2O = L-histidine + 2 NADH + 3 H(+). It participates in amino-acid biosynthesis; L-histidine biosynthesis; L-histidine from 5-phospho-alpha-D-ribose 1-diphosphate: step 9/9. Functionally, catalyzes the sequential NAD-dependent oxidations of L-histidinol to L-histidinaldehyde and then to L-histidine. The sequence is that of Histidinol dehydrogenase from Pectobacterium atrosepticum (strain SCRI 1043 / ATCC BAA-672) (Erwinia carotovora subsp. atroseptica).